Reading from the N-terminus, the 423-residue chain is Histidine--tRNA ligase (423 aa).

Belongs to the class-II aminoacyl-tRNA synthetase family. In terms of assembly, homodimer.

The protein localises to the cytoplasm. The enzyme catalyses tRNA(His) + L-histidine + ATP = L-histidyl-tRNA(His) + AMP + diphosphate + H(+). The protein is Histidine--tRNA ligase of Moorella thermoacetica (strain ATCC 39073 / JCM 9320).